The following is an 807-amino-acid chain: Glycerol-3-phosphate acyltransferase (807 aa).

Residues cysteine 305–methionine 310 carry the HXXXXD motif motif.

This sequence belongs to the GPAT/DAPAT family.

It localises to the cell inner membrane. The catalysed reaction is sn-glycerol 3-phosphate + an acyl-CoA = a 1-acyl-sn-glycero-3-phosphate + CoA. It functions in the pathway phospholipid metabolism; CDP-diacylglycerol biosynthesis; CDP-diacylglycerol from sn-glycerol 3-phosphate: step 1/3. This chain is Glycerol-3-phosphate acyltransferase, found in Aliivibrio salmonicida (strain LFI1238) (Vibrio salmonicida (strain LFI1238)).